The sequence spans 340 residues: DNA-directed RNA polymerase subunit alpha (340 aa).

The alpha N-terminal domain (alpha-NTD) stretch occupies residues Met1 to Glu236. Positions Phe251–Asn340 are alpha C-terminal domain (alpha-CTD).

Belongs to the RNA polymerase alpha chain family. As to quaternary structure, homodimer. The RNAP catalytic core consists of 2 alpha, 1 beta, 1 beta' and 1 omega subunit. When a sigma factor is associated with the core the holoenzyme is formed, which can initiate transcription.

It catalyses the reaction RNA(n) + a ribonucleoside 5'-triphosphate = RNA(n+1) + diphosphate. In terms of biological role, DNA-dependent RNA polymerase catalyzes the transcription of DNA into RNA using the four ribonucleoside triphosphates as substrates. The polypeptide is DNA-directed RNA polymerase subunit alpha (Rickettsia typhi (strain ATCC VR-144 / Wilmington)).